We begin with the raw amino-acid sequence, 402 residues long: F-box/kelch-repeat protein At4g39590 (402 aa).

Residues 1-14 (MFPMSSTSRSSAAN) are compositionally biased toward low complexity. The interval 1–37 (MFPMSSTSRSSAANNRKDPPRKKNKETPSPVTREPTS) is disordered. Polar residues predominate over residues 27-37 (TPSPVTREPTS). Positions 35–81 (PTSIDSLPNDLLLNCFARVSRMYYPALSRVSKRFRSIVTSPEIYNTR) constitute an F-box domain. Kelch repeat units follow at residues 143-198 (NIYR…VVDG), 199-246 (KIYV…YRRA), 255-300 (KLYL…LFYW), and 302-341 (QGVF…DLGG).

This Arabidopsis thaliana (Mouse-ear cress) protein is F-box/kelch-repeat protein At4g39590.